The primary structure comprises 148 residues: Deoxyuridine 5'-triphosphate nucleotidohydrolase (148 aa).

Residues 67–69 (RSG), Asn-80, 84–86 (TID), and Lys-94 contribute to the substrate site.

The protein belongs to the dUTPase family. Mg(2+) serves as cofactor.

It catalyses the reaction dUTP + H2O = dUMP + diphosphate + H(+). It participates in pyrimidine metabolism; dUMP biosynthesis; dUMP from dCTP (dUTP route): step 2/2. This enzyme is involved in nucleotide metabolism: it produces dUMP, the immediate precursor of thymidine nucleotides and it decreases the intracellular concentration of dUTP so that uracil cannot be incorporated into DNA. This chain is Deoxyuridine 5'-triphosphate nucleotidohydrolase, found in Orientia tsutsugamushi (strain Boryong) (Rickettsia tsutsugamushi).